The sequence spans 595 residues: DNA mismatch repair protein MutL (595 aa).

This sequence belongs to the DNA mismatch repair MutL/HexB family.

This protein is involved in the repair of mismatches in DNA. It is required for dam-dependent methyl-directed DNA mismatch repair. May act as a 'molecular matchmaker', a protein that promotes the formation of a stable complex between two or more DNA-binding proteins in an ATP-dependent manner without itself being part of a final effector complex. This chain is DNA mismatch repair protein MutL, found in Endomicrobium trichonymphae.